Consider the following 560-residue polypeptide: Chaperonin GroEL 2 (560 aa).

Residues 29-32 (TIGP), 86-90 (DGTTT), G413, and D492 contribute to the ATP site. The segment at 520-542 (DKPEPPSAPGAEGGDPMGGMGGM) is disordered. The segment covering 530–542 (AEGGDPMGGMGGM) has biased composition (gly residues).

Belongs to the chaperonin (HSP60) family. In terms of assembly, forms a cylinder of 14 subunits composed of two heptameric rings stacked back-to-back. Interacts with the co-chaperonin GroES.

It localises to the cytoplasm. The catalysed reaction is ATP + H2O + a folded polypeptide = ADP + phosphate + an unfolded polypeptide.. Functionally, together with its co-chaperonin GroES, plays an essential role in assisting protein folding. The GroEL-GroES system forms a nano-cage that allows encapsulation of the non-native substrate proteins and provides a physical environment optimized to promote and accelerate protein folding. The sequence is that of Chaperonin GroEL 2 from Prochlorococcus marinus (strain NATL2A).